Here is a 347-residue protein sequence, read N- to C-terminus: N-acetyl-gamma-glutamyl-phosphate reductase (347 aa).

The active site involves C150.

Belongs to the NAGSA dehydrogenase family. Type 1 subfamily.

The protein resides in the cytoplasm. The enzyme catalyses N-acetyl-L-glutamate 5-semialdehyde + phosphate + NADP(+) = N-acetyl-L-glutamyl 5-phosphate + NADPH + H(+). It participates in amino-acid biosynthesis; L-arginine biosynthesis; N(2)-acetyl-L-ornithine from L-glutamate: step 3/4. Its function is as follows. Catalyzes the NADPH-dependent reduction of N-acetyl-5-glutamyl phosphate to yield N-acetyl-L-glutamate 5-semialdehyde. This is N-acetyl-gamma-glutamyl-phosphate reductase from Leifsonia xyli subsp. xyli (strain CTCB07).